Reading from the N-terminus, the 381-residue chain is Heme A synthase (381 aa).

Transmembrane regions (helical) follow at residues 25–45 (GAVRAWLYLLAVLVVAMVAVG), 112–132 (LLGRIVGLVFFLPFAWFWWRG), 138–158 (LLLGLLGLGLLGGLQGAIGWI), 176–196 (LALHLTTASLILAGLVWLAAG), and 212–232 (VAGLLPVLVLIQIWLGGLVAG). A heme-binding site is contributed by His277. The next 3 helical transmembrane spans lie at 279 to 299 (LFAYLVVLVALAHAVQAVRMA), 307 to 327 (AMGVAALTLAQMGLGIVTLLL), and 329 to 349 (VPLWAGLAHQVFAMAVLIMAT). His337 contributes to the heme binding site.

This sequence belongs to the COX15/CtaA family. Type 2 subfamily. As to quaternary structure, interacts with CtaB. Heme b serves as cofactor.

It localises to the cell membrane. The enzyme catalyses Fe(II)-heme o + 2 A + H2O = Fe(II)-heme a + 2 AH2. It functions in the pathway porphyrin-containing compound metabolism; heme A biosynthesis; heme A from heme O: step 1/1. In terms of biological role, catalyzes the conversion of heme O to heme A by two successive hydroxylations of the methyl group at C8. The first hydroxylation forms heme I, the second hydroxylation results in an unstable dihydroxymethyl group, which spontaneously dehydrates, resulting in the formyl group of heme A. This chain is Heme A synthase, found in Methylorubrum populi (strain ATCC BAA-705 / NCIMB 13946 / BJ001) (Methylobacterium populi).